Reading from the N-terminus, the 106-residue chain is Violacin-A (106 aa).

Positions 1 to 29 (MDAQKMKMVIGLVLVATTAFALMIPAASA) are cleaved as a signal peptide. The propeptide occupies 30–79 (VDDFITRRAYDNLVKSGAIKDIPVMAKTIISNPVLEEGMLTYYTNKKLGD). 3 disulfide bridges follow: Cys84/Cys98, Cys88/Cys100, and Cys93/Cys105.

This sequence belongs to the cyclotide family. Moebius subfamily. Post-translationally, violacin-A is not a cyclic peptide.

Functionally, probably participates in a plant defense mechanism. Has low hemolytic activity. The protein is Violacin-A of Viola odorata (Sweet violet).